Reading from the N-terminus, the 214-residue chain is Large ribosomal subunit protein uL3 (214 aa).

Residues 129 to 157 (FGRGPMSHGSKNHRRPGSIGAGTTPGRVF) are disordered.

The protein belongs to the universal ribosomal protein uL3 family. As to quaternary structure, part of the 50S ribosomal subunit. Forms a cluster with proteins L14 and L19.

One of the primary rRNA binding proteins, it binds directly near the 3'-end of the 23S rRNA, where it nucleates assembly of the 50S subunit. The chain is Large ribosomal subunit protein uL3 from Synechococcus sp. (strain JA-2-3B'a(2-13)) (Cyanobacteria bacterium Yellowstone B-Prime).